The sequence spans 361 residues: Peptide chain release factor 1 (361 aa).

N5-methylglutamine is present on Q235. The disordered stretch occupies residues 286–305 (IDSARSAERKQKVGSGDRSE).

The protein belongs to the prokaryotic/mitochondrial release factor family. Post-translationally, methylated by PrmC. Methylation increases the termination efficiency of RF1.

It is found in the cytoplasm. Peptide chain release factor 1 directs the termination of translation in response to the peptide chain termination codons UAG and UAA. The protein is Peptide chain release factor 1 of Rhodopseudomonas palustris (strain HaA2).